The chain runs to 175 residues: Large ribosomal subunit protein uL10 (175 aa).

The protein belongs to the universal ribosomal protein uL10 family. In terms of assembly, part of the ribosomal stalk of the 50S ribosomal subunit. The N-terminus interacts with L11 and the large rRNA to form the base of the stalk. The C-terminus forms an elongated spine to which L12 dimers bind in a sequential fashion forming a multimeric L10(L12)X complex.

Its function is as follows. Forms part of the ribosomal stalk, playing a central role in the interaction of the ribosome with GTP-bound translation factors. This Synechococcus sp. (strain CC9605) protein is Large ribosomal subunit protein uL10.